Consider the following 205-residue polypeptide: N-(5'-phosphoribosyl)anthranilate isomerase (205 aa).

Belongs to the TrpF family.

It carries out the reaction N-(5-phospho-beta-D-ribosyl)anthranilate = 1-(2-carboxyphenylamino)-1-deoxy-D-ribulose 5-phosphate. It participates in amino-acid biosynthesis; L-tryptophan biosynthesis; L-tryptophan from chorismate: step 3/5. The protein is N-(5'-phosphoribosyl)anthranilate isomerase of Thermotoga neapolitana (strain ATCC 49049 / DSM 4359 / NBRC 107923 / NS-E).